A 322-amino-acid polypeptide reads, in one-letter code: MDYLQAMRLREANRLMIAKFKKESPANDSPEQRLVRLTNENPQYNVDFLFHSYSKDWFVSDVGMKMSNVMIPNQMLALDCEMVLCEDGTEGVVRVGAVDRNLKVILDEFVKPHKPVVDYRTAITGVTAEDVQKATLSLVDIQEKLRPFLSAGAILIDHPIVIDTSLVFKYPNSRKLRRPSLNTLCMSVLGYEVQKAGVSHHCVHDAAAAMKLALAVIKKRVDTTITLTKEAEKSRLFLHRIPHHLSSEELKKDLALKFFPKNFTIDVKPAKTQGGYYCAVVIFGSSVEANQAFENVNGYKETDSSGLPQKLISCSISTFYVR.

In terms of domain architecture, Exonuclease spans 75–213 (MLALDCEMVL…HDAAAAMKLA (139 aa)).

Belongs to the REXO1/REXO3 family.

Its subcellular location is the nucleus. Functionally, putative 3'-5' exonuclease degrading single-stranded small RNAs. The polypeptide is Putative small RNA degrading nuclease 4 (SDN4) (Arabidopsis thaliana (Mouse-ear cress)).